The sequence spans 169 residues: S-ribosylhomocysteine lyase (169 aa).

Fe cation is bound by residues H54, H58, and C129.

It belongs to the LuxS family. As to quaternary structure, homodimer. Requires Fe cation as cofactor.

It carries out the reaction S-(5-deoxy-D-ribos-5-yl)-L-homocysteine = (S)-4,5-dihydroxypentane-2,3-dione + L-homocysteine. Involved in the synthesis of autoinducer 2 (AI-2) which is secreted by bacteria and is used to communicate both the cell density and the metabolic potential of the environment. The regulation of gene expression in response to changes in cell density is called quorum sensing. Catalyzes the transformation of S-ribosylhomocysteine (RHC) to homocysteine (HC) and 4,5-dihydroxy-2,3-pentadione (DPD). This Actinobacillus pleuropneumoniae serotype 5b (strain L20) protein is S-ribosylhomocysteine lyase.